The chain runs to 347 residues: D-alanine--D-alanine ligase (347 aa).

The ATP-grasp domain maps to 131–333 (KRVLESAGIA…YPELIERLVD (203 aa)). 161-216 (EEKLAYPVFTKPSNMGSSVGISKSENQEELRQALELAFRYDSRVLVEQGVNAREIE) lines the ATP pocket. Residues Asp-287, Glu-300, and Asn-302 each coordinate Mg(2+).

Belongs to the D-alanine--D-alanine ligase family. Requires Mg(2+) as cofactor. Mn(2+) is required as a cofactor.

The protein resides in the cytoplasm. The enzyme catalyses 2 D-alanine + ATP = D-alanyl-D-alanine + ADP + phosphate + H(+). Its pathway is cell wall biogenesis; peptidoglycan biosynthesis. Functionally, cell wall formation. This Streptococcus pneumoniae (strain CGSP14) protein is D-alanine--D-alanine ligase.